The primary structure comprises 187 residues: UPF0340 protein SPD_0576 (187 aa).

Belongs to the UPF0340 family.

The chain is UPF0340 protein SPD_0576 from Streptococcus pneumoniae serotype 2 (strain D39 / NCTC 7466).